A 632-amino-acid chain; its full sequence is Tail spike protein (632 aa).

Residues 505–630 (SDARCKTEPL…KRMQEALAAL (126 aa)) enclose the Peptidase S74 domain.

Homotrimer. In terms of processing, proteolytic cleavage and release of the chaperone in the host cytosol stabilizes the folded protein. The cleavage gives rise to the mature tail spike protein but is not essential for catalytic activity.

It localises to the virion. In terms of biological role, functions as a receptor binding protein (RBP) and probably mediates the attachment to the host capsular exopolysaccharides. Displays a depolymerase activity that specifically degrades the K5-type polysaccharides of Escherichia coli capsule. The C-terminal chaperone protein mediates homotrimerization and proper folding of the catalytic trimer. This Escherichia virus K5 (Bacteriophage K5) protein is Tail spike protein (kflA).